The sequence spans 383 residues: D-aspartate oxidase 3 (383 aa).

Positions 1-17 (MLYALLLLFGGVSTVSS) are cleaved as a signal peptide. The FAD site is built by lysine 56 and serine 63. N-linked (GlcNAc...) asparagine glycans are attached at residues asparagine 152, asparagine 271, and asparagine 320. FAD is bound at residue threonine 339. Residue asparagine 371 is glycosylated (N-linked (GlcNAc...) asparagine).

Belongs to the DAMOX/DASOX family. FAD serves as cofactor. In terms of tissue distribution, in both sexes, present in coelomocytes (at protein level). Expressed in hypodermal cells and the proximal gonadal sheath cells in adult hermaphrodites (at protein level). Also expressed in probable head mesodermal cells and unidentified cells in the head, and vulval muscles in adult hermaphrodites. Expressed in the seminal vesicle, spicule and tail cells in adult males (at protein level).

The protein resides in the secreted. The catalysed reaction is D-aspartate + O2 + H2O = oxaloacetate + H2O2 + NH4(+). It carries out the reaction D-glutamate + O2 + H2O = H2O2 + 2-oxoglutarate + NH4(+). Functionally, selectively catalyzes the oxidative deamination of acidic amino acids. Plays a role in the egg-laying events and maturation processes of the reproductive organs. The protein is D-aspartate oxidase 3 (ddo-3) of Caenorhabditis elegans.